The primary structure comprises 154 residues: Iron-sulfur cluster assembly 2 homolog, mitochondrial (154 aa).

The N-terminal 8 residues, 1–8, are a transit peptide targeting the mitochondrion; sequence MAAAWGSS. The disordered stretch occupies residues 29 to 49; it reads SLGPQARREASSSSPEAGEGQ. A compositionally biased stretch (low complexity) spans 39-49; the sequence is SSSSPEAGEGQ. The Fe cation site is built by cysteine 79, cysteine 144, and cysteine 146.

It belongs to the HesB/IscA family. Heterotetramer; forms a dimer of dimers with IBA57. Interacts with [2Fe-2S]-ISCA2 forming the heterodimer [2Fe- 2S]-ISCA2-IBA57 complex; [2Fe-2S] cluster binding is absolutely required to promote the complex formation.

The protein localises to the mitochondrion. Involved in the maturation of mitochondrial 4Fe-4S proteins functioning late in the iron-sulfur cluster assembly pathway. May be involved in the binding of an intermediate of Fe/S cluster assembly. The chain is Iron-sulfur cluster assembly 2 homolog, mitochondrial (ISCA2) from Homo sapiens (Human).